A 234-amino-acid chain; its full sequence is Probable GTP-binding protein EngB (234 aa).

The EngB-type G domain occupies 23–209; that stretch reads AVPEVAFAGR…QRTVAGWLCL (187 aa). GTP-binding positions include 31-38, 58-62, 82-85, 149-152, and 187-190; these read GRSNAGKS, GRTQH, DLPG, TKAD, and LFSS. Mg(2+) contacts are provided by S38 and T60. The segment at 210 to 234 is disordered; sequence PEAMPPSPDAEPAKKTPSPDAQRGE.

Belongs to the TRAFAC class TrmE-Era-EngA-EngB-Septin-like GTPase superfamily. EngB GTPase family. It depends on Mg(2+) as a cofactor.

Functionally, necessary for normal cell division and for the maintenance of normal septation. The polypeptide is Probable GTP-binding protein EngB (Ralstonia nicotianae (strain ATCC BAA-1114 / GMI1000) (Ralstonia solanacearum)).